Consider the following 360-residue polypeptide: Phospho-N-acetylmuramoyl-pentapeptide-transferase (360 aa).

10 consecutive transmembrane segments (helical) span residues 25-45, 73-93, 94-114, 134-154, 173-193, 198-218, 240-260, 262-282, 287-307, and 337-357; these read RTIY…PWLI, TMGG…WADL, TNAY…IGFV, FCLQ…GLNG, PGYV…VNLT, GLAI…AYVA, VFCG…AYPA, IFMG…VAIL, LALV…ILQV, and KVIV…VSTL.

This sequence belongs to the glycosyltransferase 4 family. MraY subfamily. The cofactor is Mg(2+).

It is found in the cell inner membrane. It catalyses the reaction UDP-N-acetyl-alpha-D-muramoyl-L-alanyl-gamma-D-glutamyl-meso-2,6-diaminopimeloyl-D-alanyl-D-alanine + di-trans,octa-cis-undecaprenyl phosphate = di-trans,octa-cis-undecaprenyl diphospho-N-acetyl-alpha-D-muramoyl-L-alanyl-D-glutamyl-meso-2,6-diaminopimeloyl-D-alanyl-D-alanine + UMP. Its pathway is cell wall biogenesis; peptidoglycan biosynthesis. Catalyzes the initial step of the lipid cycle reactions in the biosynthesis of the cell wall peptidoglycan: transfers peptidoglycan precursor phospho-MurNAc-pentapeptide from UDP-MurNAc-pentapeptide onto the lipid carrier undecaprenyl phosphate, yielding undecaprenyl-pyrophosphoryl-MurNAc-pentapeptide, known as lipid I. This Desulfatibacillum aliphaticivorans protein is Phospho-N-acetylmuramoyl-pentapeptide-transferase.